Consider the following 200-residue polypeptide: NADH-quinone oxidoreductase subunit C (200 aa).

It belongs to the complex I 30 kDa subunit family. In terms of assembly, NDH-1 is composed of 14 different subunits. Subunits NuoB, C, D, E, F, and G constitute the peripheral sector of the complex.

The protein resides in the cell inner membrane. The catalysed reaction is a quinone + NADH + 5 H(+)(in) = a quinol + NAD(+) + 4 H(+)(out). NDH-1 shuttles electrons from NADH, via FMN and iron-sulfur (Fe-S) centers, to quinones in the respiratory chain. The immediate electron acceptor for the enzyme in this species is believed to be ubiquinone. Couples the redox reaction to proton translocation (for every two electrons transferred, four hydrogen ions are translocated across the cytoplasmic membrane), and thus conserves the redox energy in a proton gradient. The sequence is that of NADH-quinone oxidoreductase subunit C from Burkholderia thailandensis (strain ATCC 700388 / DSM 13276 / CCUG 48851 / CIP 106301 / E264).